Consider the following 557-residue polypeptide: Arginine--tRNA ligase (557 aa).

The short motif at 132–142 (ANPTGLLHMGN) is the 'HIGH' region element.

This sequence belongs to the class-I aminoacyl-tRNA synthetase family. As to quaternary structure, monomer.

The protein localises to the cytoplasm. The enzyme catalyses tRNA(Arg) + L-arginine + ATP = L-arginyl-tRNA(Arg) + AMP + diphosphate. This Carboxydothermus hydrogenoformans (strain ATCC BAA-161 / DSM 6008 / Z-2901) protein is Arginine--tRNA ligase.